A 1747-amino-acid polypeptide reads, in one-letter code: E3 ubiquitin-protein ligase listerin (1747 aa).

Positions 1-24 (MGGKTKQAPRTKNNAKPSSSSRTA) are disordered. The span at 8-24 (APRTKNNAKPSSSSRTA) shows a compositional bias: polar residues. HEAT repeat units follow at residues 65–102 (AAISPQTQIILRKLSKKDPMTKKKALQELHELIEQSDV), 106–144 (KNILPLWPKYYLNLASDPEHTVREQTQTVLQLLMAKCKK), 346–383 (NIRKTLLPKLSSLLQNGFNRNAQAICPNLLPFLSKVTQ), 424–461 (NAYFECLRFLMQQINNNKQREQKEEEFSFSLLDNNVLE), and 508–547 (KFWIRIFELVTQDLSAEEVNEQLLGHVLLLVQDLHMANPS). The residue at position 566 (Ser-566) is a Phosphoserine. 12 HEAT repeats span residues 612–653 (SRYI…LLGQ), 664–711 (EIVF…CAEA), 789–825 (SFIAQIMPVICSNNNSSLHVRQHIFLKLFKFSLEHRP), 952–989 (LSRNEILPLLQRSTLNFSTIYKLVYQFPPPQDTNDPED), 1005–1042 (KWNEPLIAELLQCIRVAGTAECWLEMSVLQSSTEELVL), 1053–1090 (GNSSDLVAIVKERLQQAAVQQSSVIDCRLLSYLRFCPQ), 1129–1166 (KLSQKAITLSSAIMGTEPPEIWVKAAVFHALLLNNFEG), 1216–1258 (VEFI…SIAQ), 1269–1307 (VAVYELFAALIDFIRSEKQKSSTELLKNMIDEWDSLFAK), 1330–1363 (FQACYEALLEQITPVIERLDYSFVYSFCKSNSNI), 1364–1400 (TLDHLCNFLFKQLYSVQHSVRLSAVHSLRQLTPHFVA), and 1500–1539 (ENFLHFLFRAMPVDILKNHGAKVHSNGVYKELTWSQQKDR). The RING-type zinc finger occupies 1697 to 1744 (CYVCYTVIHQETCQLPKLTCKTCKKKFHGPCLYKWFTTSSKSTCPICR).

The protein belongs to the LTN1 family. As to quaternary structure, component of the ribosome quality control complex (RQC), composed of at least the E3 ubiquitin ligase l(3)76BDr/LTN1 and Clbn/NEMF. The complex probably also contains TCF25 as well as TER94/VCP and its ubiquitin-binding cofactors. RQC forms a stable complex with 60S ribosomal subunits.

It is found in the cytoplasm. The protein localises to the cytosol. The enzyme catalyses S-ubiquitinyl-[E2 ubiquitin-conjugating enzyme]-L-cysteine + [acceptor protein]-L-lysine = [E2 ubiquitin-conjugating enzyme]-L-cysteine + N(6)-ubiquitinyl-[acceptor protein]-L-lysine.. The protein operates within protein modification; protein ubiquitination. E3 ubiquitin-protein ligase component of the ribosome quality control complex (RQC), a ribosome-associated complex that mediates ubiquitination and extraction of incompletely synthesized nascent chains for proteasomal degradation. Ubiquitination leads to TER94/VCP recruitment for extraction and degradation of the incomplete translation product. The polypeptide is E3 ubiquitin-protein ligase listerin (Drosophila melanogaster (Fruit fly)).